Reading from the N-terminus, the 205-residue chain is Ephrin-A1 (205 aa).

The N-terminal stretch at 1 to 17 is a signal peptide; that stretch reads MEFLWAPLLGLCCSLAA. An Ephrin RBD domain is found at 18-161; it reads ADRHIVFWNS…THNPQAHVNP (144 aa). Residue Asn26 is glycosylated (N-linked (GlcNAc...) asparagine). 2 disulfides stabilise this stretch: Cys51-Cys92 and Cys80-Cys140. Ser182 carries GPI-anchor amidated serine lipidation. A propeptide spans 183–205 (removed in mature form); that stretch reads AAPRLFPLVWAVLLLPLLLLQSQ.

Belongs to the ephrin family. As to quaternary structure, monomer. Homodimer. Forms heterodimers with EPHA2. Binds to the receptor tyrosine kinases EPHA2, EPHA3, EPHA4, EPHA5, EPHA6 and EPHA7. Also binds with low affinity to EPHA1. In terms of processing, undergoes proteolysis by a metalloprotease to give rise to a soluble monomeric form. N-Glycosylation is required for binding to EPHA2 receptor and inducing its internalization. In terms of tissue distribution, expressed in myogenic progenitor cells.

Its subcellular location is the cell membrane. It localises to the secreted. In terms of biological role, cell surface GPI-bound ligand for Eph receptors, a family of receptor tyrosine kinases which are crucial for migration, repulsion and adhesion during neuronal, vascular and epithelial development. Binds promiscuously Eph receptors residing on adjacent cells, leading to contact-dependent bidirectional signaling into neighboring cells. Plays an important role in angiogenesis and tumor neovascularization. The recruitment of VAV2, VAV3 and PI3-kinase p85 subunit by phosphorylated EPHA2 is critical for EFNA1-induced RAC1 GTPase activation and vascular endothelial cell migration and assembly. Exerts anti-oncogenic effects in tumor cells through activation and down-regulation of EPHA2. Activates EPHA2 by inducing tyrosine phosphorylation which leads to its internalization and degradation. Acts as a negative regulator in the tumorigenesis of gliomas by down-regulating EPHA2 and FAK. Can evoke collapse of embryonic neuronal growth cone and regulates dendritic spine morphogenesis. This is Ephrin-A1 (Efna1) from Mus musculus (Mouse).